The primary structure comprises 94 residues: Small ribosomal subunit protein uS19 (94 aa).

This sequence belongs to the universal ribosomal protein uS19 family.

In terms of biological role, protein S19 forms a complex with S13 that binds strongly to the 16S ribosomal RNA. This chain is Small ribosomal subunit protein uS19, found in Clostridium botulinum (strain Langeland / NCTC 10281 / Type F).